A 246-amino-acid polypeptide reads, in one-letter code: Cell division protein ZapD (246 aa).

This sequence belongs to the ZapD family. In terms of assembly, interacts with FtsZ.

It localises to the cytoplasm. Cell division factor that enhances FtsZ-ring assembly. Directly interacts with FtsZ and promotes bundling of FtsZ protofilaments, with a reduction in FtsZ GTPase activity. In Vibrio parahaemolyticus serotype O3:K6 (strain RIMD 2210633), this protein is Cell division protein ZapD.